The following is a 276-amino-acid chain: 3-methyl-2-oxobutanoate hydroxymethyltransferase (276 aa).

Mg(2+) contacts are provided by Asp44 and Asp83. Residues 44–45 (DS), Asp83, and Lys112 each bind 3-methyl-2-oxobutanoate. Glu114 is a Mg(2+) binding site. Glu180 acts as the Proton acceptor in catalysis. The interval 256-276 (PTEAQSSRMKPDELSRALNAE) is disordered.

This sequence belongs to the PanB family. As to quaternary structure, homodecamer; pentamer of dimers. It depends on Mg(2+) as a cofactor.

Its subcellular location is the cytoplasm. It catalyses the reaction 3-methyl-2-oxobutanoate + (6R)-5,10-methylene-5,6,7,8-tetrahydrofolate + H2O = 2-dehydropantoate + (6S)-5,6,7,8-tetrahydrofolate. The protein operates within cofactor biosynthesis; (R)-pantothenate biosynthesis; (R)-pantoate from 3-methyl-2-oxobutanoate: step 1/2. Functionally, catalyzes the reversible reaction in which hydroxymethyl group from 5,10-methylenetetrahydrofolate is transferred onto alpha-ketoisovalerate to form ketopantoate. This is 3-methyl-2-oxobutanoate hydroxymethyltransferase from Gluconacetobacter diazotrophicus (strain ATCC 49037 / DSM 5601 / CCUG 37298 / CIP 103539 / LMG 7603 / PAl5).